Consider the following 100-residue polypeptide: Small ribosomal subunit protein uS14c (100 aa).

This sequence belongs to the universal ribosomal protein uS14 family. In terms of assembly, part of the 30S ribosomal subunit.

It is found in the plastid. Its subcellular location is the chloroplast. In terms of biological role, binds 16S rRNA, required for the assembly of 30S particles. This Lotus japonicus (Lotus corniculatus var. japonicus) protein is Small ribosomal subunit protein uS14c.